Here is a 31-residue protein sequence, read N- to C-terminus: Malate dehydrogenase, mitochondrial (31 aa).

NAD(+) contacts are provided by residues 9–19 and 20–31; these read GIGQPLSLLMK and DDLFNINAGIVK.

The protein belongs to the LDH/MDH superfamily. MDH type 1 family. In terms of assembly, homodimer.

It localises to the mitochondrion matrix. The enzyme catalyses (S)-malate + NAD(+) = oxaloacetate + NADH + H(+). The sequence is that of Malate dehydrogenase, mitochondrial from Imperata cylindrica (Cogon grass).